The sequence spans 178 residues: uncharacterized protein (178 aa).

Positions 1 to 23 are cleaved as a signal peptide; that stretch reads MTMFKKISVLFFTLILAGCSSWS.

This is an uncharacterized protein from Haemophilus influenzae (strain ATCC 51907 / DSM 11121 / KW20 / Rd).